We begin with the raw amino-acid sequence, 346 residues long: Signal recognition particle receptor FtsY (346 aa).

GTP-binding positions include 143-150, 225-229, and 289-292; these read GVNGVGKT, DTSGR, and TKMD.

Belongs to the GTP-binding SRP family. FtsY subfamily. Part of the signal recognition particle protein translocation system, which is composed of SRP and FtsY.

It localises to the cell membrane. The protein localises to the cytoplasm. The enzyme catalyses GTP + H2O = GDP + phosphate + H(+). In terms of biological role, involved in targeting and insertion of nascent membrane proteins into the cytoplasmic membrane. Acts as a receptor for the complex formed by the signal recognition particle (SRP) and the ribosome-nascent chain (RNC). This Mycoplasma genitalium (strain ATCC 33530 / DSM 19775 / NCTC 10195 / G37) (Mycoplasmoides genitalium) protein is Signal recognition particle receptor FtsY.